The primary structure comprises 219 residues: LHFPL tetraspan subfamily member 5 protein (219 aa).

The Cytoplasmic portion of the chain corresponds to 1 to 24 (MVKLLPAQEAAKIYHTNYVRNSRA). A helical transmembrane segment spans residues 25–45 (VGVMWGTLTICFSVLVMALFI). The Extracellular segment spans residues 46–98 (QPYWIGDSVSTPQAGYFGLFSYCVGNVLSSELICKGGPLDFSSIPSRAFKTAM). Residues 99–119 (FFVALAMFLIIGSIICFSLFF) traverse the membrane as a helical segment. Residues 120–128 (VCNTATVYK) lie on the Cytoplasmic side of the membrane. The chain crosses the membrane as a helical span at residues 129 to 149 (ICAWMQLAAATGLMIGCLVYP). The Extracellular segment spans residues 150–178 (DGWDSSEVRRMCGEQTGKYTLGHCTIRWA). A helical transmembrane segment spans residues 179–199 (FMLAILSIGDALILSFLAFVL). The Cytoplasmic segment spans residues 200–219 (GYRQDKLLPDDYKADGNEEV).

The protein belongs to the LHFP family. In terms of assembly, forms the MET channel composed of TMC (TMC1 or TMC2), TMIE, TOMT, CIB (CIB2 or CIB3), LHPL5 and PCDH15. Interaction with PCDH15 is required for efficient localization to hair bundles.

It is found in the cell membrane. In terms of biological role, auxiliary subunit of the mechanotransducer (MET) non-specific cation channel complex located at the tips of the shorter stereocilia of cochlear hair cells and that mediates sensory transduction in the auditory system. The MET complex is composed of two dimeric pore-forming ion-conducting transmembrane TMC (TMC1 or TMC2) subunits, and aided by several auxiliary proteins including LHFPL5, TMIE, CIB2/3 and TOMT, and the tip-link PCDH15. Functionally couples PCDH15 to the transduction channel. This Rattus norvegicus (Rat) protein is LHFPL tetraspan subfamily member 5 protein.